A 472-amino-acid chain; its full sequence is Glutamate--tRNA ligase (472 aa).

The short motif at 7 to 17 (PSPTGFLHVGG) is the 'HIGH' region element. Zn(2+) is bound by residues C96, C98, C123, and H125. Basic and acidic residues predominate over residues 112–129 (ARKEKPRYDGRCRHRSEP). A disordered region spans residues 112–134 (ARKEKPRYDGRCRHRSEPPSDQP). The 'KMSKS' region motif lies at 234-238 (KLSKR). K237 contributes to the ATP binding site.

This sequence belongs to the class-I aminoacyl-tRNA synthetase family. Glutamate--tRNA ligase type 1 subfamily. As to quaternary structure, monomer. Zn(2+) is required as a cofactor.

The protein resides in the cytoplasm. It carries out the reaction tRNA(Glu) + L-glutamate + ATP = L-glutamyl-tRNA(Glu) + AMP + diphosphate. Catalyzes the attachment of glutamate to tRNA(Glu) in a two-step reaction: glutamate is first activated by ATP to form Glu-AMP and then transferred to the acceptor end of tRNA(Glu). This chain is Glutamate--tRNA ligase, found in Magnetococcus marinus (strain ATCC BAA-1437 / JCM 17883 / MC-1).